A 273-amino-acid polypeptide reads, in one-letter code: SPRY domain-containing SOCS box protein 4 (273 aa).

The disordered stretch occupies residues 1–34 (MGQKLSGSLKSVEVREPALRPAKRELRGAEPGRP). Residues 12-34 (VEVREPALRPAKRELRGAEPGRP) are compositionally biased toward basic and acidic residues. The B30.2/SPRY domain occupies 34–233 (PARLDQLLDM…MRYINGLDPE (200 aa)). The SOCS box domain occupies 234–273 (PLPLMDLCRRSIRSALGRQRLQDISSLPLPQSLKNYLQYQ).

This sequence belongs to the SPSB family. As to quaternary structure, component of the probable ECS(SPSB4) E3 ubiquitin-protein ligase complex which contains CUL5, RNF7/RBX2, Elongin BC complex and SPSB4. Interacts with CUL5; RNF7; ELOB and ELOC. Interacts with MET. Interacts (via B30.2/SPRY domain) with PAWR; this interaction occurs in association with the Elongin BC complex. Interacts with NOS2. Interacts with EPHB2.

The protein resides in the cytoplasm. The protein localises to the cytosol. Its pathway is protein modification; protein ubiquitination. Substrate recognition component of a SCF-like ECS (Elongin BC-CUL2/5-SOCS-box protein) E3 ubiquitin-protein ligase complex which mediates the ubiquitination and subsequent proteasomal degradation of target proteins. Negatively regulates nitric oxide (NO) production and limits cellular toxicity in activated macrophages by mediating the ubiquitination and proteasomal degradation of NOS2. Acts as a bridge which links NOS2 with the ECS E3 ubiquitin ligase complex components ELOC and CUL5. Diminishes EphB2-dependent cell repulsive responses by mediating the ubiquitination and degradation of EphB2/CTF2. Regulates cellular clock function by mediating the ubiquitin/proteasome-dependent degradation of the circadian transcriptional repressor NR1D1. This chain is SPRY domain-containing SOCS box protein 4 (SPSB4), found in Homo sapiens (Human).